A 343-amino-acid chain; its full sequence is Glyceraldehyde-3-phosphate dehydrogenase (343 aa).

Residues 13–14 and glycine 111 contribute to the NAD(+) site; that span reads TI. 140–142 serves as a coordination point for D-glyceraldehyde 3-phosphate; sequence SCN. The active-site Nucleophile is the cysteine 141. NAD(+) is bound at residue arginine 169. Position 195–196 (195–196) interacts with D-glyceraldehyde 3-phosphate; the sequence is HA. Glutamine 303 contacts NAD(+).

The protein belongs to the glyceraldehyde-3-phosphate dehydrogenase family. Homotetramer.

The protein resides in the cytoplasm. The enzyme catalyses D-glyceraldehyde 3-phosphate + phosphate + NADP(+) = (2R)-3-phospho-glyceroyl phosphate + NADPH + H(+). It catalyses the reaction D-glyceraldehyde 3-phosphate + phosphate + NAD(+) = (2R)-3-phospho-glyceroyl phosphate + NADH + H(+). It participates in carbohydrate degradation; glycolysis; pyruvate from D-glyceraldehyde 3-phosphate: step 1/5. The protein is Glyceraldehyde-3-phosphate dehydrogenase of Sulfolobus acidocaldarius (strain ATCC 33909 / DSM 639 / JCM 8929 / NBRC 15157 / NCIMB 11770).